The primary structure comprises 568 residues: CDK5 and ABL1 enzyme substrate 1 (568 aa).

The segment covering 1-31 (MAAATATAGTAACSSSSSSRGGSTDAAATSG) has biased composition (low complexity). Disordered regions lie at residues 1–94 (MAAA…PGAR) and 130–169 (PSLVPRVLGEPSQPPRSAPAVTGAQLQLPDGPGGAGQEEL). Residues 1–98 (MAAATATAGT…TKPGARARLS (98 aa)) are interaction with TDRD7. Residues 33 to 45 (QPPPPPPATAPPE) are compositionally biased toward pro residues. The span at 46-56 (PLRKPRMDPRR) shows a compositional bias: basic and acidic residues. Residues 140 to 427 (PSQPPRSAPA…TTVIDYVKPS (288 aa)) form an interaction with CDK3 region. Ser248 carries the phosphoserine modification. Ser274 bears the Phosphoserine; by CDK2 and CDK3 mark. Thr350 is subject to Phosphothreonine.

Belongs to the cyclin family. As to quaternary structure, found in a complex with p53/TP53. Found in a number of complexes with CDK2, CDK3, CDK5, ABL1, TDRD7, CDK17, CCNA1, CCNE1 and TP73. Interacts with CDK2, CDK3, CDK5, ABL1 and TDRD7. In terms of processing, phosphorylated on Ser-274 by CCNE1/CDK3. Phosphorylated on serine/threonine residues by CDK5 and on tyrosine residues by ABL1. Also phosphorylated in vitro by CCNA1/CDK2, CCNE1/CDK2, CCNA1/CDK3 and CCNE1/CDK3. Ubiquitous. Expressed in postnatal day 1 (P1), in postmitotic neurons of the subplate, cortex (V/VI) and marginal zone; in postnatal day 7 (P7), in all layers of the cerebral cortex and in the CA1 and CA2 regions of the hippocampus (at protein level). Highly expressed in brain, kidney, liver and lung.

The protein resides in the nucleus. It localises to the cytoplasm. The protein localises to the cell projection. Its subcellular location is the growth cone. Cyclin-dependent kinase binding protein. Enhances cyclin-dependent kinase tyrosine phosphorylation by nonreceptor tyrosine kinases, such as that of CDK5 by activated ABL1, which leads to increased CDK5 activity and is critical for neuronal development, and that of CDK2 by WEE1, which leads to decreased CDK2 activity and growth inhibition. Positively affects neuronal outgrowth. Plays a role as a regulator for p53/p73-induced cell death. The sequence is that of CDK5 and ABL1 enzyme substrate 1 (Cables1) from Mus musculus (Mouse).